A 372-amino-acid chain; its full sequence is Anhydro-N-acetylmuramic acid kinase (372 aa).

13–20 (GTSMDGID) is a binding site for ATP.

It belongs to the anhydro-N-acetylmuramic acid kinase family.

It catalyses the reaction 1,6-anhydro-N-acetyl-beta-muramate + ATP + H2O = N-acetyl-D-muramate 6-phosphate + ADP + H(+). Its pathway is amino-sugar metabolism; 1,6-anhydro-N-acetylmuramate degradation. The protein operates within cell wall biogenesis; peptidoglycan recycling. Catalyzes the specific phosphorylation of 1,6-anhydro-N-acetylmuramic acid (anhMurNAc) with the simultaneous cleavage of the 1,6-anhydro ring, generating MurNAc-6-P. Is required for the utilization of anhMurNAc either imported from the medium or derived from its own cell wall murein, and thus plays a role in cell wall recycling. This chain is Anhydro-N-acetylmuramic acid kinase, found in Rhizobium johnstonii (strain DSM 114642 / LMG 32736 / 3841) (Rhizobium leguminosarum bv. viciae).